Consider the following 148-residue polypeptide: Globin-3 (148 aa).

A Globin domain is found at 2-148 (TLTKHEQDIL…HVFPMMAAEI (147 aa)). Residue His-99 coordinates heme.

The protein belongs to the globin family. As to quaternary structure, monomer.

Functionally, oxygen binding protein. The polypeptide is Globin-3 (Paramphistomum epiclitum).